We begin with the raw amino-acid sequence, 178 residues long: Translation initiation factor IF-3 (178 aa).

The tract at residues 1–20 is disordered; sequence MRRPFKAAAPTKDGPRSNRD.

It belongs to the IF-3 family. As to quaternary structure, monomer.

It is found in the cytoplasm. In terms of biological role, IF-3 binds to the 30S ribosomal subunit and shifts the equilibrium between 70S ribosomes and their 50S and 30S subunits in favor of the free subunits, thus enhancing the availability of 30S subunits on which protein synthesis initiation begins. This is Translation initiation factor IF-3 from Mesorhizobium japonicum (strain LMG 29417 / CECT 9101 / MAFF 303099) (Mesorhizobium loti (strain MAFF 303099)).